The following is a 441-amino-acid chain: Aminopeptidase C (441 aa).

Catalysis depends on residues C70, H361, and N382.

It belongs to the peptidase C1 family.

The catalysed reaction is Inactivates bleomycin B2 (a cytotoxic glycometallopeptide) by hydrolysis of a carboxyamide bond of beta-aminoalanine, but also shows general aminopeptidase activity. The specificity varies somewhat with source, but amino acid arylamides of Met, Leu and Ala are preferred.. The protein is Aminopeptidase C (pepC) of Listeria innocua serovar 6a (strain ATCC BAA-680 / CLIP 11262).